A 154-amino-acid polypeptide reads, in one-letter code: Myoglobin (154 aa).

One can recognise a Globin domain in the interval 2 to 148 (GLSDAEWQLV…FRNDIAAQYK (147 aa)). The residue at position 4 (Ser-4) is a Phosphoserine. His-65 serves as a coordination point for nitrite. His-65 provides a ligand contact to O2. At Thr-68 the chain carries Phosphothreonine. His-94 is a heme b binding site.

Belongs to the globin family. As to quaternary structure, monomeric.

It localises to the cytoplasm. Its subcellular location is the sarcoplasm. It catalyses the reaction Fe(III)-heme b-[protein] + nitric oxide + H2O = Fe(II)-heme b-[protein] + nitrite + 2 H(+). It carries out the reaction H2O2 + AH2 = A + 2 H2O. Monomeric heme protein which primary function is to store oxygen and facilitate its diffusion within muscle tissues. Reversibly binds oxygen through a pentacoordinated heme iron and enables its timely and efficient release as needed during periods of heightened demand. Depending on the oxidative conditions of tissues and cells, and in addition to its ability to bind oxygen, it also has a nitrite reductase activity whereby it regulates the production of bioactive nitric oxide. Under stress conditions, like hypoxia and anoxia, it also protects cells against reactive oxygen species thanks to its pseudoperoxidase activity. The chain is Myoglobin (MB) from Oryctolagus cuniculus (Rabbit).